The primary structure comprises 134 residues: Lymphocyte antigen 6S (134 aa).

The first 26 residues, methionine 1 to glycine 26, serve as a signal peptide directing secretion. A UPAR/Ly6 domain is found at arginine 28–cysteine 76. Intrachain disulfides connect cysteine 29–cysteine 53, cysteine 32–cysteine 41, cysteine 76–cysteine 98, and cysteine 99–cysteine 104. Asparagine 105 is lipidated: GPI-anchor amidated asparagine. Residues alanine 106–leucine 134 constitute a propeptide, removed in mature form.

The protein resides in the cell membrane. This chain is Lymphocyte antigen 6S, found in Homo sapiens (Human).